The sequence spans 380 residues: Chaperone protein DnaJ (380 aa).

The J domain maps to 5 to 69 (DYYEILGVSK…QKRAHYDQFG (65 aa)). The segment at 135 to 217 (GKETDIEIPR…CGGTGRVKRR (83 aa)) adopts a CR-type zinc-finger fold. Zn(2+) is bound by residues C148, C151, C165, C168, C191, C194, C205, and C208. 4 CXXCXGXG motif repeats span residues 148 to 155 (CNTCHGTG), 165 to 172 (CSYCHGTG), 191 to 198 (CPYCGGTG), and 205 to 212 (CTTCGGTG).

Belongs to the DnaJ family. In terms of assembly, homodimer. It depends on Zn(2+) as a cofactor.

The protein localises to the cytoplasm. Functionally, participates actively in the response to hyperosmotic and heat shock by preventing the aggregation of stress-denatured proteins and by disaggregating proteins, also in an autonomous, DnaK-independent fashion. Unfolded proteins bind initially to DnaJ; upon interaction with the DnaJ-bound protein, DnaK hydrolyzes its bound ATP, resulting in the formation of a stable complex. GrpE releases ADP from DnaK; ATP binding to DnaK triggers the release of the substrate protein, thus completing the reaction cycle. Several rounds of ATP-dependent interactions between DnaJ, DnaK and GrpE are required for fully efficient folding. Also involved, together with DnaK and GrpE, in the DNA replication of plasmids through activation of initiation proteins. This chain is Chaperone protein DnaJ, found in Parageobacillus thermoglucosidasius (Geobacillus thermoglucosidasius).